A 351-amino-acid polypeptide reads, in one-letter code: Ribosomal RNA small subunit methyltransferase H (351 aa).

S-adenosyl-L-methionine contacts are provided by residues 48-50 (GGY), D67, F94, D115, and Q122. Residues 274-351 (AAQASRHVPG…PAPQGRGPRR (78 aa)) form a disordered region.

This sequence belongs to the methyltransferase superfamily. RsmH family.

Its subcellular location is the cytoplasm. The enzyme catalyses cytidine(1402) in 16S rRNA + S-adenosyl-L-methionine = N(4)-methylcytidine(1402) in 16S rRNA + S-adenosyl-L-homocysteine + H(+). Functionally, specifically methylates the N4 position of cytidine in position 1402 (C1402) of 16S rRNA. The protein is Ribosomal RNA small subunit methyltransferase H of Methylorubrum extorquens (strain PA1) (Methylobacterium extorquens).